The primary structure comprises 212 residues: Inner membrane-spanning protein YciB (212 aa).

5 consecutive transmembrane segments (helical) span residues alanine 49–leucine 69, threonine 78–histidine 98, tryptophan 105–alanine 125, leucine 150–phenylalanine 170, and phenylalanine 178–methionine 198.

It belongs to the YciB family.

The protein localises to the cell inner membrane. Functionally, plays a role in cell envelope biogenesis, maintenance of cell envelope integrity and membrane homeostasis. The chain is Inner membrane-spanning protein YciB from Leptothrix cholodnii (strain ATCC 51168 / LMG 8142 / SP-6) (Leptothrix discophora (strain SP-6)).